Consider the following 412-residue polypeptide: BSD domain-containing protein 1 (412 aa).

In terms of domain architecture, BSD spans 146–198 (WLAYWDPEHRKAEISELLVTSPSIRALYTKMVPAAVSHSEFWQRYFYKVHQLE). 2 stretches are compositionally biased toward basic and acidic residues: residues 208–219 (KQRADQSVHSEE) and 255–271 (HVEDKSEKMAELNRDHT). Disordered stretches follow at residues 208-228 (KQRADQSVHSEEPQWEEEEED) and 255-383 (HVED…EKDF). The segment covering 272-287 (SITSPSESSESISPIT) has biased composition (low complexity). Residues 340–351 (THREDPPSDLRV) show a composition bias toward basic and acidic residues. Positions 355-374 (NSDSGKSTPSNNGQKGSSTD) are enriched in polar residues.

This Xenopus tropicalis (Western clawed frog) protein is BSD domain-containing protein 1 (bsdc1).